The sequence spans 373 residues: Opsin Rh1 (373 aa).

The Extracellular portion of the chain corresponds to 1–54 (MDSFAAVATQLGPHFAALSNGSVVDKVTPDMAHLISPYWNQFPAMDPIWAKILT). Asn-20 carries N-linked (GlcNAc...) asparagine glycosylation. Residues 55–75 (AYMIIIGMISWCGNGVVIYIF) traverse the membrane as a helical segment. Residues 76–86 (ATTKSLRTPAN) are Cytoplasmic-facing. The chain crosses the membrane as a helical span at residues 87–107 (LLVINLAISDFGIMITNTPMM). The Extracellular portion of the chain corresponds to 108-124 (GINLYFETWVLGPMMCD). The cysteines at positions 123 and 200 are disulfide-linked. A helical transmembrane segment spans residues 125 to 145 (IYAGLGSAFGCSSIWSMCMIS). Over 146 to 162 (LDRYQVIVKGMAGRPMT) the chain is Cytoplasmic. A helical transmembrane segment spans residues 163–183 (IPLALGKIAYIWFMSSIWCLA). Residues 184–219 (PVFGWSRYVPEGNLTSCGIDYLERDWNPRSYLIFYS) lie on the Extracellular side of the membrane. Asn-196 carries an N-linked (GlcNAc...) asparagine glycan. A helical transmembrane segment spans residues 220 to 240 (IFVYYIPLFLICYSYWFIIAA). The Cytoplasmic portion of the chain corresponds to 241–276 (VSAHEKAMREQAKKMNVKSLRSSEDADKSAEGKLAK). The chain crosses the membrane as a helical span at residues 277–297 (VALVTISLWFMAWTPYLVINC). The Extracellular segment spans residues 298–308 (MGLFKFEGLTP). The helical transmembrane segment at 309-331 (LNTIWGACFAKSAACYNPIVYGI) threads the bilayer. Lys-319 carries the N6-(retinylidene)lysine modification. The Cytoplasmic segment spans residues 332–373 (SHPKYRLALKEKCPCCVFGKVDDGKSSEAQSQATNSEAESKA). Residues 354–373 (DGKSSEAQSQATNSEAESKA) form a disordered region. Over residues 358-373 (SEAQSQATNSEAESKA) the composition is skewed to polar residues.

Belongs to the G-protein coupled receptor 1 family. Opsin subfamily. Phosphorylated on some or all of the serine and threonine residues present in the C-terminal region.

It localises to the cell projection. It is found in the rhabdomere membrane. In terms of biological role, visual pigments are the light-absorbing molecules that mediate vision. They consist of an apoprotein, opsin, covalently linked to cis-retinal. This chain is Opsin Rh1 (ninaE), found in Drosophila pseudoobscura pseudoobscura (Fruit fly).